The primary structure comprises 259 residues: Polycomb group RING finger protein 1 (259 aa).

N-acetylalanine is present on alanine 2. A Phosphoserine modification is found at serine 3. A Glycyl lysine isopeptide (Lys-Gly) (interchain with G-Cter in SUMO2) cross-link involves residue lysine 24. The RING-type zinc-finger motif lies at cysteine 47–asparagine 86. Residues asparagine 86–proline 247 form a necessary for repressor activity region. Lysine 88 participates in a covalent cross-link: Glycyl lysine isopeptide (Lys-Gly) (interchain with G-Cter in SUMO2). A required for the interaction with the KDM2B-SKP1 heterodimeric complex region spans residues leucine 150 to lysine 255. The segment at glutamate 167–lysine 255 is RING-finger and WD40-associated ubiquitin-like domain (RAWUL); sufficient for interaction with BCOR and BCORL1.

In terms of assembly, interacts with BCORL1, forming heterodimers. The PCGF1-BCORL1 heterodimeric complex interacts with the KDM2B-SKP1 heterodimeric complex to form a homotetrameric polycomb repression complex 1 (PRC1.1). Component of the repressive BCOR complex containing a Polycomb group subcomplex at least composed of RYBP, RING1 and RNF2/RING2. Specifically interacts with BCOR, RING1 and RNF2/RING2. Component of a PRC1-like complex. Interacts with CBX6, CBX7 and CBX8. Interacts with DPPA4, NANOG, POU5F1 and RYBP.

The protein localises to the nucleus. Component of the Polycomb group (PcG) multiprotein BCOR complex, a complex required to maintain the transcriptionally repressive state of some genes, such as BCL6 and the cyclin-dependent kinase inhibitor, CDKN1A. Transcriptional repressor that may be targeted to the DNA by BCL6; this transcription repressor activity may be related to PKC signaling pathway. Represses CDKN1A expression by binding to its promoter, and this repression is dependent on the retinoic acid response element (RARE element). Promotes cell cycle progression and enhances cell proliferation as well. May have a positive role in tumor cell growth by down-regulating CDKN1A. Component of a Polycomb group (PcG) multiprotein PRC1-like complex, a complex class required to maintain the transcriptionally repressive state of many genes, including Hox genes, throughout development. PcG PRC1 complex acts via chromatin remodeling and modification of histones; it mediates monoubiquitination of histone H2A 'Lys-119', rendering chromatin heritably changed in its expressibility. Within the PRC1-like complex, regulates RNF2 ubiquitin ligase activity. Regulates the expression of DPPA4 and NANOG in the NT2 embryonic carcinoma cells. The polypeptide is Polycomb group RING finger protein 1 (Pcgf1) (Mus musculus (Mouse)).